The chain runs to 379 residues: tRNA-specific 2-thiouridylase MnmA (379 aa).

ATP is bound by residues 6 to 13 and leucine 32; that span reads AMSGGVDS. Cysteine 101 serves as the catalytic Nucleophile. Cysteine 101 and cysteine 199 are joined by a disulfide. Glycine 125 contacts ATP. Residues 148 to 150 are interaction with tRNA; that stretch reads KDQ. Cysteine 199 acts as the Cysteine persulfide intermediate in catalysis.

The protein belongs to the MnmA/TRMU family.

The protein localises to the cytoplasm. It carries out the reaction S-sulfanyl-L-cysteinyl-[protein] + uridine(34) in tRNA + AH2 + ATP = 2-thiouridine(34) in tRNA + L-cysteinyl-[protein] + A + AMP + diphosphate + H(+). Functionally, catalyzes the 2-thiolation of uridine at the wobble position (U34) of tRNA, leading to the formation of s(2)U34. The chain is tRNA-specific 2-thiouridylase MnmA from Paenarthrobacter aurescens (strain TC1).